Consider the following 176-residue polypeptide: Crossover junction endodeoxyribonuclease RuvC (176 aa).

Active-site residues include D10, E69, and D141. Positions 10, 69, and 141 each coordinate Mg(2+).

This sequence belongs to the RuvC family. As to quaternary structure, homodimer which binds Holliday junction (HJ) DNA. The HJ becomes 2-fold symmetrical on binding to RuvC with unstacked arms; it has a different conformation from HJ DNA in complex with RuvA. In the full resolvosome a probable DNA-RuvA(4)-RuvB(12)-RuvC(2) complex forms which resolves the HJ. It depends on Mg(2+) as a cofactor.

The protein localises to the cytoplasm. The enzyme catalyses Endonucleolytic cleavage at a junction such as a reciprocal single-stranded crossover between two homologous DNA duplexes (Holliday junction).. Its function is as follows. The RuvA-RuvB-RuvC complex processes Holliday junction (HJ) DNA during genetic recombination and DNA repair. Endonuclease that resolves HJ intermediates. Cleaves cruciform DNA by making single-stranded nicks across the HJ at symmetrical positions within the homologous arms, yielding a 5'-phosphate and a 3'-hydroxyl group; requires a central core of homology in the junction. The consensus cleavage sequence is 5'-(A/T)TT(C/G)-3'. Cleavage occurs on the 3'-side of the TT dinucleotide at the point of strand exchange. HJ branch migration catalyzed by RuvA-RuvB allows RuvC to scan DNA until it finds its consensus sequence, where it cleaves and resolves the cruciform DNA. The polypeptide is Crossover junction endodeoxyribonuclease RuvC (Dichelobacter nodosus (strain VCS1703A)).